Here is a 1319-residue protein sequence, read N- to C-terminus: Son of sevenless homolog 1 (1319 aa).

One can recognise a DH domain in the interval 200–390 (TYYDLVKAFM…LNVQSGMEKI (191 aa)). In terms of domain architecture, PH spans 444 to 548 (FIMEGTLTRV…AALISLQYRS (105 aa)). The N-terminal Ras-GEF domain maps to 597-741 (GIPIIKAGTV…SITKIIQRKK (145 aa)). A Ras-GEF domain is found at 780-1019 (HPIEIARQLT…FNKSLEIEPR (240 aa)). A disordered region spans residues 1019–1101 (RHPKPLPRFP…ASGTSSNTDV (83 aa)). 2 positions are modified to phosphoserine: Ser-1078 and Ser-1082. 2 positions are modified to phosphoserine; by RPS6KA3: Ser-1120 and Ser-1147. The disordered stretch occupies residues 1121-1319 (VSSISLSKGT…PPLLENAHSS (199 aa)). Ser-1164, Ser-1196, and Ser-1215 each carry phosphoserine. Over residues 1194 to 1203 (PESPPLLPPR) the composition is skewed to pro residues. Over residues 1238–1250 (SPSPFTPPPPQTP) the composition is skewed to pro residues. Ser-1261 is modified (phosphoserine). Positions 1296–1309 (YKREHTHPSMHRDG) are enriched in basic and acidic residues.

As to quaternary structure, interacts (via C-terminus) with GRB2 (via SH3 domain). Forms a complex with phosphorylated MUC1 and GRB2 (via its SH3 domains). Interacts with phosphorylated LAT2. Interacts with NCK1 and NCK2. Part of a complex consisting of ABI1, EPS8 and SOS1. Interacts (Ser-1120 and Ser-1147 phosphorylated form) with YWHAB and YWHAE. Phosphorylation at Ser-1120 and Ser-1147 by RPS6KA3 create YWHAB and YWHAE binding sites and which contribute to the negative regulation of EGF-induced MAPK1/3 phosphorylation. As to expression, expressed in most embryonic and adult tissues.

Its function is as follows. Promotes the exchange of Ras-bound GDP by GTP. Probably by promoting Ras activation, regulates phosphorylation of MAP kinase MAPK3 in response to EGF. Catalytic component of a trimeric complex that participates in transduction of signals from Ras to Rac by promoting the Rac-specific guanine nucleotide exchange factor (GEF) activity. The polypeptide is Son of sevenless homolog 1 (Sos1) (Mus musculus (Mouse)).